The following is a 479-amino-acid chain: MEYRAVIGLEVHVQLNTNTKIFCGCSTKFGAEPNSQTCPVCLGMPGALPVLNRKVVEYAIKAGLATNCEIAPRSIFARKNYFYPDLPKGYQISQYELPICSAGHLDIQVEGTAKRIGITRIHMEEDAGKLVHADVPGVGDDSCVDLNRACTPLLEIVSEPDLRSADEAVAYLKKLHQIVVYLGISDGNMEEGSFRCDANVSVMRVGADKFGTRTETKNVNSFKFVKQAIEYEIERQIEVIEDGGKIVQETRLFDPNTGVTRSMRGKEEAHDYRYFPDPDLVPLVISNDWVEDVRLGLPELPEAKRLRYMDELGLPAYDAEVLTASRELADYFEACLEFHSQPKPVANWVMGEVTRALNEENRSITDAPVTPQLLAELLQLIDKGTISGKIAKTVFDEMWRTGKAPAKVVEEKGLVQVSDTGEIEKIIDEVLAREAGQVAEYRSGKDKLFGFFVGQVMRASKGKANPAVVNELLLKKLQG.

The protein belongs to the GatB/GatE family. GatB subfamily. As to quaternary structure, heterotrimer of A, B and C subunits.

The catalysed reaction is L-glutamyl-tRNA(Gln) + L-glutamine + ATP + H2O = L-glutaminyl-tRNA(Gln) + L-glutamate + ADP + phosphate + H(+). The enzyme catalyses L-aspartyl-tRNA(Asn) + L-glutamine + ATP + H2O = L-asparaginyl-tRNA(Asn) + L-glutamate + ADP + phosphate + 2 H(+). Functionally, allows the formation of correctly charged Asn-tRNA(Asn) or Gln-tRNA(Gln) through the transamidation of misacylated Asp-tRNA(Asn) or Glu-tRNA(Gln) in organisms which lack either or both of asparaginyl-tRNA or glutaminyl-tRNA synthetases. The reaction takes place in the presence of glutamine and ATP through an activated phospho-Asp-tRNA(Asn) or phospho-Glu-tRNA(Gln). The polypeptide is Aspartyl/glutamyl-tRNA(Asn/Gln) amidotransferase subunit B (Geotalea daltonii (strain DSM 22248 / JCM 15807 / FRC-32) (Geobacter daltonii)).